The primary structure comprises 204 residues: VEL1-related protein AC977.05c (204 aa).

Positions 1–17 (MIFKNLISLFFIGLATA) are cleaved as a signal peptide.

This sequence belongs to the VEL1 family.

It localises to the cytoplasm. It is found in the cytosol. The polypeptide is VEL1-related protein AC977.05c (Schizosaccharomyces pombe (strain 972 / ATCC 24843) (Fission yeast)).